The chain runs to 432 residues: Glutamyl-tRNA reductase (432 aa).

Substrate contacts are provided by residues threonine 50–arginine 53, serine 110, glutamate 115–glutamine 117, and glutamine 121. The Nucleophile role is filled by cysteine 51. Glycine 190–serine 195 contributes to the NADP(+) binding site.

It belongs to the glutamyl-tRNA reductase family. Homodimer.

It catalyses the reaction (S)-4-amino-5-oxopentanoate + tRNA(Glu) + NADP(+) = L-glutamyl-tRNA(Glu) + NADPH + H(+). It functions in the pathway porphyrin-containing compound metabolism; protoporphyrin-IX biosynthesis; 5-aminolevulinate from L-glutamyl-tRNA(Glu): step 1/2. Catalyzes the NADPH-dependent reduction of glutamyl-tRNA(Glu) to glutamate 1-semialdehyde (GSA). The chain is Glutamyl-tRNA reductase from Aliarcobacter butzleri (strain RM4018) (Arcobacter butzleri).